Here is a 686-residue protein sequence, read N- to C-terminus: DNA topoisomerase 1 (686 aa).

Residues M1–K141 enclose the Toprim domain. Residues E7 and D107 each contribute to the Mg(2+) site. Positions N156–L574 constitute a Topo IA-type catalytic domain. The interval S196–Q201 is interaction with DNA. Catalysis depends on Y317, which acts as the O-(5'-phospho-DNA)-tyrosine intermediate. Residues C606–C634 form a C4-type 1 zinc finger. Residues C653–C678 form a C4-type 2; atypical zinc finger.

This sequence belongs to the type IA topoisomerase family. As to quaternary structure, monomer. Mg(2+) serves as cofactor.

It catalyses the reaction ATP-independent breakage of single-stranded DNA, followed by passage and rejoining.. Releases the supercoiling and torsional tension of DNA, which is introduced during the DNA replication and transcription, by transiently cleaving and rejoining one strand of the DNA duplex. Introduces a single-strand break via transesterification at a target site in duplex DNA. The scissile phosphodiester is attacked by the catalytic tyrosine of the enzyme, resulting in the formation of a DNA-(5'-phosphotyrosyl)-enzyme intermediate and the expulsion of a 3'-OH DNA strand. The free DNA strand then undergoes passage around the unbroken strand, thus removing DNA supercoils. Finally, in the religation step, the DNA 3'-OH attacks the covalent intermediate to expel the active-site tyrosine and restore the DNA phosphodiester backbone. This chain is DNA topoisomerase 1, found in Pyrococcus horikoshii (strain ATCC 700860 / DSM 12428 / JCM 9974 / NBRC 100139 / OT-3).